The following is a 248-amino-acid chain: MDFQSDLTREISPQRKLGRGKIEIKRIENTTNRQVTFCKRRNGLLKKAYELSVLCDAEVALIVFSSRGRLYEYANNSVKATIERYKKACSDSSNTGSISEANAQYYQQEASKLRAQIGNLQNQNRNMLGESLAALSLRDLKNLEQKIEKGISKIRSKKNELLFAEIEYMQKREIDLHNNNQYLRAKIAETERAQQQQQQQQMNLMPGSSSYELVPPPHQFDTRNYLQVNGLQTNNHYTRQDQPSLQLV.

The MADS-box domain maps to 19–73; it reads RGKIEIKRIENTTNRQVTFCKRRNGLLKKAYELSVLCDAEVALIVFSSRGRLYEY. The region spanning 103–193 is the K-box domain; the sequence is AQYYQQEASK…RAKIAETERA (91 aa). Residues 196 to 219 are disordered; the sequence is QQQQQQMNLMPGSSSYELVPPPHQ. Over residues 202–211 the composition is skewed to polar residues; sequence MNLMPGSSSY.

It localises to the nucleus. In terms of biological role, probable transcription factor involved in regulating genes that determines stamen and carpel development in wild-type flowers. The sequence is that of Floral homeotic protein AGAMOUS (AG1) from Nicotiana tabacum (Common tobacco).